Reading from the N-terminus, the 79-residue chain is Small ribosomal subunit protein uS17 (79 aa).

The protein belongs to the universal ribosomal protein uS17 family. As to quaternary structure, part of the 30S ribosomal subunit.

In terms of biological role, one of the primary rRNA binding proteins, it binds specifically to the 5'-end of 16S ribosomal RNA. This chain is Small ribosomal subunit protein uS17, found in Roseobacter denitrificans (strain ATCC 33942 / OCh 114) (Erythrobacter sp. (strain OCh 114)).